We begin with the raw amino-acid sequence, 357 residues long: Alanine racemase, catabolic (357 aa).

The active-site Proton acceptor; specific for D-alanine is the lysine 33. At lysine 33 the chain carries N6-(pyridoxal phosphate)lysine. Residue lysine 122 is modified to N6-carboxylysine. Arginine 129 contributes to the substrate binding site. The Proton acceptor; specific for L-alanine role is filled by tyrosine 253. Residue methionine 301 participates in substrate binding.

It belongs to the alanine racemase family. Homodimer. The cofactor is pyridoxal 5'-phosphate.

The catalysed reaction is L-alanine = D-alanine. Isomerizes L-alanine to D-alanine which is then oxidized to pyruvate by DadA. The chain is Alanine racemase, catabolic from Pseudomonas aeruginosa (strain ATCC 15692 / DSM 22644 / CIP 104116 / JCM 14847 / LMG 12228 / 1C / PRS 101 / PAO1).